Reading from the N-terminus, the 173-residue chain is Methylated-DNA--protein-cysteine methyltransferase (173 aa).

Cys-143 (nucleophile; methyl group acceptor) is an active-site residue.

The protein belongs to the MGMT family.

The protein localises to the cytoplasm. It catalyses the reaction a 6-O-methyl-2'-deoxyguanosine in DNA + L-cysteinyl-[protein] = S-methyl-L-cysteinyl-[protein] + a 2'-deoxyguanosine in DNA. It carries out the reaction a 4-O-methyl-thymidine in DNA + L-cysteinyl-[protein] = a thymidine in DNA + S-methyl-L-cysteinyl-[protein]. Its function is as follows. Involved in the cellular defense against the biological effects of O6-methylguanine (O6-MeG) and O4-methylthymine (O4-MeT) in DNA. Repairs the methylated nucleobase in DNA by stoichiometrically transferring the methyl group to a cysteine residue in the enzyme. This is a suicide reaction: the enzyme is irreversibly inactivated. The chain is Methylated-DNA--protein-cysteine methyltransferase from Pyrococcus sp. (strain NA2).